Consider the following 191-residue polypeptide: MKINGNEIRPGNVIEHQGSLWVAVKCNAVKPGKGGAFNQVELKNLLDGTKLNERFRAAETVERVRLEQKDFTFLYQQGDALVFMDSESYEQLELQKDFVGERAAFLQDGMTVTVELYQEKPIGISLPDQVAVTIVEADPALKGQTVTSSYKPAILENGIRILVPPFMNAGERIIVDTNELIYLRRANEKDK.

The protein belongs to the elongation factor P family.

The protein resides in the cytoplasm. It participates in protein biosynthesis; polypeptide chain elongation. Involved in peptide bond synthesis. Stimulates efficient translation and peptide-bond synthesis on native or reconstituted 70S ribosomes in vitro. Probably functions indirectly by altering the affinity of the ribosome for aminoacyl-tRNA, thus increasing their reactivity as acceptors for peptidyl transferase. In Bartonella tribocorum (strain CIP 105476 / IBS 506), this protein is Elongation factor P.